A 114-amino-acid polypeptide reads, in one-letter code: Protein ORF3 (114 aa).

2 hydrophobic regions span residues 6 to 22 (CALG…CLCC) and 33 to 53 (AVVG…GLIL). Positions 28-68 (VSRLAAVVGGAAAVPAVVSGVTGLILSPSQSPIFIQPTPLP) are interaction with host HPX. A homodimerization, and interaction with host AMBP/bikunin region spans residues 72–114 (PLRPGLDLAFANQPGHLAPLGEIRPSAPPLPPVADLPQPGLRR). The segment at 91 to 114 (LGEIRPSAPPLPPVADLPQPGLRR) is disordered. Residues 95–104 (RPSAPPLPPV) are interaction with host SRC, HCK, FYN, PIK3R3 and GRB2. The PTAP/PSAP motif motif lies at 96-99 (PSAP).

The protein belongs to the hepevirus ORF3 protein family. As to quaternary structure, forms homooligomers. Interacts with host SRC, HCK, FYN, PIK3R3 and GRB2 (via SH3 domain); binding does not activate the kinases. Interacts with host AMBP/bikunin and AMBP/alpha-1-microglobulin peptides. Interacts with host HPX/hemopexin. Interacts (when phosphorylated) with capsid protein ORF2. Interacts with host TSG101; this interaction plays a role in viral release from the host cell. Interacts with host SIRPA; this interaction down-regulates the phosphorylation of host IRF3. Post-translationally, palmitoylated in the N-terminus.

The protein localises to the host endoplasmic reticulum membrane. The protein resides in the host cytoplasm. It localises to the host cytoskeleton. It is found in the virion. Its subcellular location is the host cell membrane. Its function is as follows. Small multifunctional phosphoprotein involved in virion morphogenesis, egress and counteracting host innate immunity. Plays critical roles in the final steps of viral release by interacting with host TSG101, a member of the vacuolar protein-sorting pathway and using other cellular host proteins involved in vesicle formation pathway. Also acts as a viroporin and forms ion conductive pores allowing viral particle release. Impairs the generation of type I interferon by down-regulating host TLR3 and TLR7 as well as their downstream signaling pathways. Down-regulates the phosphorylation of host IRF3 via the interaction with host SIRP-alpha, thereby inhibiting IFN-I expression. Interacts with host microtubules. The polypeptide is Protein ORF3 (Hepatitis E virus genotype 2 (isolate Human/Mexico) (HEV-2)).